Reading from the N-terminus, the 188-residue chain is Elongation factor P (188 aa).

This sequence belongs to the elongation factor P family.

It is found in the cytoplasm. The protein operates within protein biosynthesis; polypeptide chain elongation. In terms of biological role, involved in peptide bond synthesis. Stimulates efficient translation and peptide-bond synthesis on native or reconstituted 70S ribosomes in vitro. Probably functions indirectly by altering the affinity of the ribosome for aminoacyl-tRNA, thus increasing their reactivity as acceptors for peptidyl transferase. In Paramagnetospirillum magneticum (strain ATCC 700264 / AMB-1) (Magnetospirillum magneticum), this protein is Elongation factor P.